The primary structure comprises 504 residues: ATP-dependent rRNA helicase RRP3 (504 aa).

The span at 34 to 62 shows a compositional bias: low complexity; sequence ASASSAASTKESLPVSETISISTSETPVS. A disordered region spans residues 34-99; that stretch reads ASASSAASTK…SSSSPPSVQS (66 aa). Over residues 68–79 the composition is skewed to basic and acidic residues; the sequence is SNKEDLSTKKDQ. Low complexity predominate over residues 80 to 99; sequence SSASSSSSTSSSSSPPSVQS. The Q motif signature appears at 98–126; the sequence is QSFTEFDLVPELLESIQSLKYTQPTPIQA. Residues 129-301 enclose the Helicase ATP-binding domain; that stretch reads IPHALQGKDI…RSLNSPVQVE (173 aa). 142–149 contributes to the ATP binding site; the sequence is AETGSGKT. A DEAD box motif is present at residues 248-251; sequence DEVD. One can recognise a Helicase C-terminal domain in the interval 327-471; the sequence is RLIQIVNLDS…DLPLDEMQGL (145 aa).

The protein belongs to the DEAD box helicase family. DDX47/RRP3 subfamily. Interacts with the SSU processome.

It is found in the nucleus. It catalyses the reaction ATP + H2O = ADP + phosphate + H(+). Its function is as follows. ATP-dependent rRNA helicase required for pre-ribosomal RNA processing. Involved in the maturation of the 35S-pre-rRNA and to its cleavage to mature 18S rRNA. The sequence is that of ATP-dependent rRNA helicase RRP3 from Lodderomyces elongisporus (strain ATCC 11503 / CBS 2605 / JCM 1781 / NBRC 1676 / NRRL YB-4239) (Yeast).